Here is a 572-residue protein sequence, read N- to C-terminus: Isocitrate dehydrogenase kinase/phosphatase (572 aa).

Residues 317 to 323 and lysine 338 each bind ATP; that span reads APGVRGM. Residue aspartate 373 is part of the active site.

This sequence belongs to the AceK family.

The protein localises to the cytoplasm. The enzyme catalyses L-seryl-[isocitrate dehydrogenase] + ATP = O-phospho-L-seryl-[isocitrate dehydrogenase] + ADP + H(+). Its function is as follows. Bifunctional enzyme which can phosphorylate or dephosphorylate isocitrate dehydrogenase (IDH) on a specific serine residue. This is a regulatory mechanism which enables bacteria to bypass the Krebs cycle via the glyoxylate shunt in response to the source of carbon. When bacteria are grown on glucose, IDH is fully active and unphosphorylated, but when grown on acetate or ethanol, the activity of IDH declines drastically concomitant with its phosphorylation. In Ectopseudomonas mendocina (strain ymp) (Pseudomonas mendocina), this protein is Isocitrate dehydrogenase kinase/phosphatase.